We begin with the raw amino-acid sequence, 147 residues long: Small ribosomal subunit protein bS6 (147 aa).

A disordered region spans residues 103 to 147 (AARMAANLPSFPEDEDTEEKGSAPLAREEEGIGEEAQTDEAEDKE). A compositionally biased stretch (acidic residues) spans 133–147 (GIGEEAQTDEAEDKE).

It belongs to the bacterial ribosomal protein bS6 family.

Binds together with bS18 to 16S ribosomal RNA. This Syntrophobacter fumaroxidans (strain DSM 10017 / MPOB) protein is Small ribosomal subunit protein bS6.